The following is a 297-amino-acid chain: Pyridoxal 5'-phosphate synthase subunit SNZ1 (297 aa).

Residue Asp23 coordinates D-ribose 5-phosphate. Lys80 (schiff-base intermediate with D-ribose 5-phosphate) is an active-site residue. Gly152 contributes to the D-ribose 5-phosphate binding site. Arg164 is a binding site for D-glyceraldehyde 3-phosphate. D-ribose 5-phosphate is bound by residues Gly214 and 235 to 236 (GS).

It belongs to the PdxS/SNZ family. As to quaternary structure, homohexamer. Interacts with AIM18.

It catalyses the reaction aldehydo-D-ribose 5-phosphate + D-glyceraldehyde 3-phosphate + L-glutamine = pyridoxal 5'-phosphate + L-glutamate + phosphate + 3 H2O + H(+). The protein operates within cofactor biosynthesis; pyridoxal 5'-phosphate biosynthesis. Functionally, catalyzes the formation of pyridoxal 5'-phosphate from ribose 5-phosphate (RBP), glyceraldehyde 3-phosphate (G3P) and ammonia. The ammonia is provided by a SNO isoform. Can also use ribulose 5-phosphate and dihydroxyacetone phosphate as substrates, resulting from enzyme-catalyzed isomerization of RBP and G3P, respectively. This Saccharomyces cerevisiae (strain ATCC 204508 / S288c) (Baker's yeast) protein is Pyridoxal 5'-phosphate synthase subunit SNZ1 (SNZ1).